Reading from the N-terminus, the 277-residue chain is Probable CCR4-associated factor 1 homolog 10 (277 aa).

Positions 40, 42, 166, and 235 each coordinate a divalent metal cation.

It belongs to the CAF1 family. Component of the CCR4-NOT complex, at least composed of CRR4 and CAF1 proteins. Requires a divalent metal cation as cofactor.

Its subcellular location is the nucleus. It localises to the cytoplasm. It carries out the reaction Exonucleolytic cleavage of poly(A) to 5'-AMP.. Functionally, ubiquitous transcription factor required for a diverse set of processes. It is a component of the CCR4 complex involved in the control of gene expression. The sequence is that of Probable CCR4-associated factor 1 homolog 10 (CAF1-10) from Arabidopsis thaliana (Mouse-ear cress).